The sequence spans 130 residues: Small ribosomal subunit protein uS11 (130 aa).

This sequence belongs to the universal ribosomal protein uS11 family. Part of the 30S ribosomal subunit. Interacts with proteins S7 and S18. Binds to IF-3.

In terms of biological role, located on the platform of the 30S subunit, it bridges several disparate RNA helices of the 16S rRNA. Forms part of the Shine-Dalgarno cleft in the 70S ribosome. This is Small ribosomal subunit protein uS11 from Xanthomonas oryzae pv. oryzae (strain MAFF 311018).